A 477-amino-acid polypeptide reads, in one-letter code: Asparaginyl-tRNA synthetase (477 aa).

A mitochondrion-targeting transit peptide spans 1–14 (MLGVRCLLRSVRFC). Lysine 353 carries the N6-acetyllysine modification.

It belongs to the class-II aminoacyl-tRNA synthetase family. As to quaternary structure, homodimer.

The protein localises to the mitochondrion matrix. Its subcellular location is the mitochondrion. It carries out the reaction tRNA(Asn) + L-asparagine + ATP = L-asparaginyl-tRNA(Asn) + AMP + diphosphate + H(+). Its function is as follows. Mitochondrial aminoacyl-tRNA synthetase that catalyzes the specific attachment of the asparagine amino acid (aa) to the homologous transfer RNA (tRNA), further participating in protein synthesis. The reaction occurs in a two steps: asparagine is first activated by ATP to form Asn-AMP and then transferred to the acceptor end of tRNA(Asn). The protein is Asparaginyl-tRNA synthetase of Homo sapiens (Human).